The following is a 363-amino-acid chain: Pyrimidine monooxygenase RutA (363 aa).

FMN contacts are provided by residues 49–50 (IK), Asn-115, Glu-124, 140–141 (RY), and Ser-190.

It belongs to the NtaA/SnaA/DszA monooxygenase family. RutA subfamily.

It carries out the reaction uracil + FMNH2 + NADH + O2 = (Z)-3-ureidoacrylate + FMN + NAD(+) + H2O + H(+). The enzyme catalyses thymine + FMNH2 + NADH + O2 = (Z)-2-methylureidoacrylate + FMN + NAD(+) + H2O + H(+). Functionally, catalyzes the pyrimidine ring opening between N-3 and C-4 by an unusual flavin hydroperoxide-catalyzed mechanism, adding oxygen atoms in the process to yield ureidoacrylate peracid, that immediately reacts with FMN forming ureidoacrylate and FMN-N(5)-oxide. The FMN-N(5)-oxide reacts spontaneously with NADH to produce FMN. Requires the flavin reductase RutF to regenerate FMN in vivo. The chain is Pyrimidine monooxygenase RutA from Escherichia coli (strain SMS-3-5 / SECEC).